Reading from the N-terminus, the 309-residue chain is Ribosomal RNA small subunit methyltransferase H (309 aa).

Residues 36 to 38, Asp56, Phe82, Asp103, and Gln110 contribute to the S-adenosyl-L-methionine site; that span reads GGH.

It belongs to the methyltransferase superfamily. RsmH family.

The protein resides in the cytoplasm. It carries out the reaction cytidine(1402) in 16S rRNA + S-adenosyl-L-methionine = N(4)-methylcytidine(1402) in 16S rRNA + S-adenosyl-L-homocysteine + H(+). Specifically methylates the N4 position of cytidine in position 1402 (C1402) of 16S rRNA. This is Ribosomal RNA small subunit methyltransferase H from Hahella chejuensis (strain KCTC 2396).